We begin with the raw amino-acid sequence, 79 residues long: Exodeoxyribonuclease 7 small subunit (79 aa).

This sequence belongs to the XseB family. In terms of assembly, heterooligomer composed of large and small subunits.

It is found in the cytoplasm. It carries out the reaction Exonucleolytic cleavage in either 5'- to 3'- or 3'- to 5'-direction to yield nucleoside 5'-phosphates.. Its function is as follows. Bidirectionally degrades single-stranded DNA into large acid-insoluble oligonucleotides, which are then degraded further into small acid-soluble oligonucleotides. In Dechloromonas aromatica (strain RCB), this protein is Exodeoxyribonuclease 7 small subunit.